The following is a 72-amino-acid chain: Probable protein E5B (72 aa).

The polypeptide is Probable protein E5B (Homo sapiens (Human)).